The primary structure comprises 287 residues: MSLKERFTSYAYLIRLDKPIGTLLLLWPTLWALWLASSGTPSLQMLMIFIAGTFLMRSAGCAINDYADRDFDRHVQRTKHRPVTSGKISGKEAVVVAGVLALIAFLLIQPLNIFTKELSVLALLVAFIYPFTKRFLAIPQAVLGIAFGFGIPMAYAAVLDFIPLEAWVLFVGNIFWAIAYDTAYAMVDRDDDLRLGLRTSAITFGSYEVLAIAFSYGVLFVSQLWVAHLASLSNYFLIGWGAALGCAIYQLKLVSSRKREDCFLAFRHNNWLGGFLFLGIVLGLSIQ.

Helical transmembrane passes span 19–39 (PIGTLLLLWPTLWALWLASSG), 43–63 (LQMLMIFIAGTFLMRSAGCAI), 94–114 (VVVAGVLALIAFLLIQPLNIF), 118–138 (LSVLALLVAFIYPFTKRFLAI), 142–162 (VLGIAFGFGIPMAYAAVLDFI), 167–187 (WVLFVGNIFWAIAYDTAYAMV), 209–229 (VLAIAFSYGVLFVSQLWVAHL), 235–255 (YFLIGWGAALGCAIYQLKLVS), and 263–283 (FLAFRHNNWLGGFLFLGIVLG).

Belongs to the UbiA prenyltransferase family. The cofactor is Mg(2+).

Its subcellular location is the cell inner membrane. The catalysed reaction is all-trans-octaprenyl diphosphate + 4-hydroxybenzoate = 4-hydroxy-3-(all-trans-octaprenyl)benzoate + diphosphate. Its pathway is cofactor biosynthesis; ubiquinone biosynthesis. Functionally, catalyzes the prenylation of para-hydroxybenzoate (PHB) with an all-trans polyprenyl group. Mediates the second step in the final reaction sequence of ubiquinone-8 (UQ-8) biosynthesis, which is the condensation of the polyisoprenoid side chain with PHB, generating the first membrane-bound Q intermediate 3-octaprenyl-4-hydroxybenzoate. The protein is 4-hydroxybenzoate octaprenyltransferase of Polynucleobacter asymbioticus (strain DSM 18221 / CIP 109841 / QLW-P1DMWA-1) (Polynucleobacter necessarius subsp. asymbioticus).